We begin with the raw amino-acid sequence, 132 residues long: Small ribosomal subunit protein uS8 (132 aa).

This sequence belongs to the universal ribosomal protein uS8 family. As to quaternary structure, part of the 30S ribosomal subunit. Contacts proteins S5 and S12.

Its function is as follows. One of the primary rRNA binding proteins, it binds directly to 16S rRNA central domain where it helps coordinate assembly of the platform of the 30S subunit. This chain is Small ribosomal subunit protein uS8, found in Micrococcus luteus (strain ATCC 4698 / DSM 20030 / JCM 1464 / CCM 169 / CCUG 5858 / IAM 1056 / NBRC 3333 / NCIMB 9278 / NCTC 2665 / VKM Ac-2230) (Micrococcus lysodeikticus).